A 218-amino-acid polypeptide reads, in one-letter code: Uracil-DNA glycosylase (218 aa).

Asp59 functions as the Proton acceptor in the catalytic mechanism.

This sequence belongs to the uracil-DNA glycosylase (UDG) superfamily. UNG family.

It localises to the cytoplasm. It carries out the reaction Hydrolyzes single-stranded DNA or mismatched double-stranded DNA and polynucleotides, releasing free uracil.. In terms of biological role, excises uracil residues from the DNA which can arise as a result of misincorporation of dUMP residues by DNA polymerase or due to deamination of cytosine. This chain is Uracil-DNA glycosylase, found in Staphylococcus saprophyticus subsp. saprophyticus (strain ATCC 15305 / DSM 20229 / NCIMB 8711 / NCTC 7292 / S-41).